Here is a 478-residue protein sequence, read N- to C-terminus: Maintenance of telomere capping protein 1 (478 aa).

Residues 1 to 153 are disordered; that stretch reads MSENKNSEAE…LHDPIASISN (153 aa). 2 stretches are compositionally biased toward basic and acidic residues: residues 77–87 and 95–124; these read TDKKGVEKKAP and AQDE…QQQE. Positions 125–141 are enriched in acidic residues; sequence KEEEEEEEEEEEEEEEE. The residue at position 273 (Ser-273) is a Phosphoserine. 2 stretches are compositionally biased toward basic and acidic residues: residues 321 to 336 and 421 to 435; these read QKQQ…DDRS and SEER…KQKE. 2 disordered regions span residues 321–341 and 416–448; these read QKQQ…ISSN and TGST…IIDP. A Phosphoserine modification is found at Ser-436. A compositionally biased stretch (acidic residues) spans 436-447; that stretch reads SEDEDEDDEIID.

Belongs to the MTC1 family. Interacts with ribosomes.

Its subcellular location is the cytoplasm. The protein resides in the cytoplasmic vesicle. It localises to the COPI-coated vesicle. Involved in telomere capping. The protein is Maintenance of telomere capping protein 1 (MTC1) of Saccharomyces cerevisiae (strain ATCC 204508 / S288c) (Baker's yeast).